Reading from the N-terminus, the 98-residue chain is MNLYDVIKKPVITESSMAQLEAGKYVFEVDTRAHKLLIKQAVEAAFEGVKVANVNTINVKPKAKRVGRYTGFTNKTKKAIITLTADSKAIELFGAEAE.

Belongs to the universal ribosomal protein uL23 family. In terms of assembly, part of the 50S ribosomal subunit. Contacts protein L29, and trigger factor when it is bound to the ribosome.

One of the early assembly proteins it binds 23S rRNA. One of the proteins that surrounds the polypeptide exit tunnel on the outside of the ribosome. Forms the main docking site for trigger factor binding to the ribosome. The polypeptide is Large ribosomal subunit protein uL23 (Streptococcus gordonii (strain Challis / ATCC 35105 / BCRC 15272 / CH1 / DL1 / V288)).